A 146-amino-acid polypeptide reads, in one-letter code: Snaclec 5 (146 aa).

The signal sequence occupies residues 1-23 (MGRFIFISFGLLVVFLSLSGTEA). 3 disulfide bridges follow: Cys25–Cys36, Cys53–Cys142, and Cys119–Cys134. A C-type lectin domain is found at 32–143 (YEGHCYRVFD…CRNYGHFVCK (112 aa)).

It belongs to the snaclec family. Heterodimer; disulfide-linked. Expressed by the venom gland.

It is found in the secreted. Its function is as follows. Interferes with one step of hemostasis (modulation of platelet aggregation, or coagulation cascade, for example). The protein is Snaclec 5 of Echis pyramidum leakeyi (Leakey's carpet viper).